An 831-amino-acid polypeptide reads, in one-letter code: Leucine--tRNA ligase (831 aa).

Positions 35–45 match the 'HIGH' region motif; sequence PYPSGKIHVGH. Residues 600-604 carry the 'KMSKS' region motif; the sequence is KMSKS. K603 contacts ATP.

Belongs to the class-I aminoacyl-tRNA synthetase family.

The protein localises to the cytoplasm. The catalysed reaction is tRNA(Leu) + L-leucine + ATP = L-leucyl-tRNA(Leu) + AMP + diphosphate. This chain is Leucine--tRNA ligase, found in Rickettsia bellii (strain RML369-C).